The primary structure comprises 498 residues: Glycerol kinase (498 aa).

Thr-12 is a binding site for ADP. Positions 12, 13, and 14 each coordinate ATP. A sn-glycerol 3-phosphate-binding site is contributed by Thr-12. Arg-16 contributes to the ADP binding site. Arg-82, Tyr-134, and Asp-243 together coordinate sn-glycerol 3-phosphate. Arg-82, Tyr-134, Asp-243, and Gln-244 together coordinate glycerol. Positions 265 and 308 each coordinate ADP. 4 residues coordinate ATP: Thr-265, Gly-308, Gln-312, and Gly-411. Gly-411 is a binding site for ADP.

This sequence belongs to the FGGY kinase family.

The catalysed reaction is glycerol + ATP = sn-glycerol 3-phosphate + ADP + H(+). Its pathway is polyol metabolism; glycerol degradation via glycerol kinase pathway; sn-glycerol 3-phosphate from glycerol: step 1/1. Inhibited by fructose 1,6-bisphosphate (FBP). Functionally, key enzyme in the regulation of glycerol uptake and metabolism. Catalyzes the phosphorylation of glycerol to yield sn-glycerol 3-phosphate. The sequence is that of Glycerol kinase from Brucella suis (strain ATCC 23445 / NCTC 10510).